The following is a 264-amino-acid chain: Vitellin-degrading protease (264 aa).

The first 15 residues, 1–15 (MTNSLLICFTILGLA), serve as a signal peptide directing secretion. A propeptide spans 16-27 (ASSPTKPIGDIR) (activation peptide). Residues 28-253 (IVGGEDIVIT…LREWVDENIT (226 aa)) enclose the Peptidase S1 domain. The cysteines at positions 53 and 69 are disulfide-linked. Catalysis depends on charge relay system residues His68 and Asp113. Cys178 and Cys194 are disulfide-bonded. Asp203 serves as a coordination point for substrate. Cys205 and Cys229 are oxidised to a cystine. Ser209 serves as the catalytic Charge relay system. N-linked (GlcNAc...) asparagine glycosylation occurs at Asn251.

Belongs to the peptidase S1 family. Cleavage after Arg-27 leads to beta-VTN protease and subsequent cleavage after Arg-89 leads to alpha-VTN.

Responsible for the degradation of vitellin in eggs at the head pigmentation stage. This is Vitellin-degrading protease from Bombyx mori (Silk moth).